Reading from the N-terminus, the 326-residue chain is MSIPPVIFLPIFFYSSFVQAFNAPECIDKGQYFASFMELENEPVILPCPQINTISSGYNILDILWEKRGADNDRIIPIDNGSNMLILNPTQSDSGIYICITKNETYCDMMSLNLTIVSVSESNIDLISYTQIVNERTTGEMVCPNINAFIASNVNADIIWSGHRRLRNKRLRQRTPGIITIEDVRKNDAGYYTCVLKYTYGDKTYDVTRIVKLEVRDRMIPPTMQLPDGVVTSIGSNLTIACRVSLRPPTTDADVFWISNGMYYEEDDEDGDGRISVANKIYTTDKRRVITSRLKINPVKEEDATTFTCMAFTIPSISKTVTISIT.

An N-terminal signal peptide occupies residues 1–18 (MSIPPVIFLPIFFYSSFV). Ig-like C2-type domains are found at residues 24-115 (PECI…LNLT), 122-208 (SNID…YDVT), and 221-322 (PPTM…KTVT). An intrachain disulfide couples cysteine 48 to cysteine 99. N-linked (GlcNAc...) asparagine; by host glycosylation is found at asparagine 80, asparagine 103, and asparagine 113. A disulfide bridge links cysteine 143 with cysteine 194. The N-linked (GlcNAc...) asparagine; by host glycan is linked to asparagine 237. Cysteines 242 and 309 form a disulfide.

This sequence belongs to the interleukin-1 receptor family. As to quaternary structure, interacts with mouse Il1b.

The protein localises to the secreted. Its function is as follows. May reduce the host inflammatory response by interacting with inteleukin-1 beta (Il1b) and thus decreasing the association between IL1B and its cellular receptor. This is Interleukin-1-binding protein (OPG201) from Bos taurus (Bovine).